The sequence spans 475 residues: MNTTLAQQIANEGGVEAWMVAQQHKSLLRFLTCGSVDDGKSTLIGRLLHDTRQIYEDQLSSLHNDSKRHGTQGEKLDLALLVDGLQAEREQGITIDVAYRYFSTEKRKFIIADTPGHEQYTRNMATGASTCDLAILLIDARKGVLDQTRRHSFISTLLGIKHLVVAINKMDLVGFSEETFARIREDYLTFAGQLPGNRDIRFVPLSALEGDNVATQSASMPWYNGPTLLEVLETVEIQRVVDTQPMRFPVQYVNRPNLDFRGYAGTLASGSVKVGQRIKVLPSGVESNVARIVTFDGDLQEAHAGEAITLVLKDEIDISRGDLLLDAGENLPAVQSAAVDVVWMAEQPLSAGQSYDIKIAGKKTRARVDAIRHQVDINNLTQREVESLPLNGIGLVELTFDEPLVLDTYQQNPVTGGLIIIDRLSNVTVGAGLVREPIEHTAATPSGFSDFELELNALIRRHFPHWGARDLLGGK.

The 215-residue stretch at 25 to 239 (KSLLRFLTCG…EVLETVEIQR (215 aa)) folds into the tr-type G domain. Residues 34-41 (GSVDDGKS) form a G1 region. GTP is bound at residue 34–41 (GSVDDGKS). Positions 92–96 (GITID) are G2. Residues 113–116 (DTPG) are G3. Residues 113–117 (DTPGH) and 168–171 (NKMD) each bind GTP. The G4 stretch occupies residues 168-171 (NKMD). Residues 206 to 208 (SAL) are G5.

This sequence belongs to the TRAFAC class translation factor GTPase superfamily. Classic translation factor GTPase family. CysN/NodQ subfamily. As to quaternary structure, heterodimer composed of CysD, the smaller subunit, and CysN.

The enzyme catalyses sulfate + ATP + H(+) = adenosine 5'-phosphosulfate + diphosphate. Its pathway is sulfur metabolism; hydrogen sulfide biosynthesis; sulfite from sulfate: step 1/3. Its function is as follows. With CysD forms the ATP sulfurylase (ATPS) that catalyzes the adenylation of sulfate producing adenosine 5'-phosphosulfate (APS) and diphosphate, the first enzymatic step in sulfur assimilation pathway. APS synthesis involves the formation of a high-energy phosphoric-sulfuric acid anhydride bond driven by GTP hydrolysis by CysN coupled to ATP hydrolysis by CysD. This Citrobacter koseri (strain ATCC BAA-895 / CDC 4225-83 / SGSC4696) protein is Sulfate adenylyltransferase subunit 1.